A 637-amino-acid polypeptide reads, in one-letter code: 1-deoxy-D-xylulose-5-phosphate synthase (637 aa).

Residues histidine 76 and glycine 117–serine 119 each bind thiamine diphosphate. Aspartate 148 contributes to the Mg(2+) binding site. Thiamine diphosphate contacts are provided by residues glycine 149–alanine 150, asparagine 177, tyrosine 294, and glutamate 381. Asparagine 177 is a binding site for Mg(2+).

This sequence belongs to the transketolase family. DXPS subfamily. As to quaternary structure, homodimer. It depends on Mg(2+) as a cofactor. Thiamine diphosphate is required as a cofactor.

The catalysed reaction is D-glyceraldehyde 3-phosphate + pyruvate + H(+) = 1-deoxy-D-xylulose 5-phosphate + CO2. It participates in metabolic intermediate biosynthesis; 1-deoxy-D-xylulose 5-phosphate biosynthesis; 1-deoxy-D-xylulose 5-phosphate from D-glyceraldehyde 3-phosphate and pyruvate: step 1/1. Functionally, catalyzes the acyloin condensation reaction between C atoms 2 and 3 of pyruvate and glyceraldehyde 3-phosphate to yield 1-deoxy-D-xylulose-5-phosphate (DXP). This chain is 1-deoxy-D-xylulose-5-phosphate synthase, found in Neisseria meningitidis serogroup A / serotype 4A (strain DSM 15465 / Z2491).